Consider the following 181-residue polypeptide: Peptidyl-tRNA hydrolase (181 aa).

Y14 contacts tRNA. H19 acts as the Proton acceptor in catalysis. TRNA contacts are provided by Y62, N64, and N108.

Belongs to the PTH family. In terms of assembly, monomer.

The protein localises to the cytoplasm. The catalysed reaction is an N-acyl-L-alpha-aminoacyl-tRNA + H2O = an N-acyl-L-amino acid + a tRNA + H(+). In terms of biological role, hydrolyzes ribosome-free peptidyl-tRNAs (with 1 or more amino acids incorporated), which drop off the ribosome during protein synthesis, or as a result of ribosome stalling. Functionally, catalyzes the release of premature peptidyl moieties from peptidyl-tRNA molecules trapped in stalled 50S ribosomal subunits, and thus maintains levels of free tRNAs and 50S ribosomes. The chain is Peptidyl-tRNA hydrolase from Campylobacter jejuni (strain RM1221).